The chain runs to 437 residues: Adenylosuccinate synthetase (437 aa).

Residues 12-18 and 40-42 contribute to the GTP site; these read GDEGKGK and GHT. Catalysis depends on D13, which acts as the Proton acceptor. Positions 13 and 40 each coordinate Mg(2+). Residues 13–16, 38–41, T128, R142, Q223, T238, and R302 contribute to the IMP site; these read DEGK and NAGH. H41 serves as the catalytic Proton donor. 298–304 serves as a coordination point for substrate; that stretch reads TTTGRRR. GTP contacts are provided by residues R304, 330-332, and 412-414; these read KLD and SLG.

It belongs to the adenylosuccinate synthetase family. As to quaternary structure, homodimer. Mg(2+) is required as a cofactor.

Its subcellular location is the cytoplasm. It catalyses the reaction IMP + L-aspartate + GTP = N(6)-(1,2-dicarboxyethyl)-AMP + GDP + phosphate + 2 H(+). Its pathway is purine metabolism; AMP biosynthesis via de novo pathway; AMP from IMP: step 1/2. Plays an important role in the de novo pathway of purine nucleotide biosynthesis. Catalyzes the first committed step in the biosynthesis of AMP from IMP. The chain is Adenylosuccinate synthetase from Prochlorococcus marinus (strain NATL1A).